Reading from the N-terminus, the 208-residue chain is Large ribosomal subunit protein uL4 (208 aa).

The interval Arg-45–Val-89 is disordered.

It belongs to the universal ribosomal protein uL4 family. As to quaternary structure, part of the 50S ribosomal subunit.

Functionally, one of the primary rRNA binding proteins, this protein initially binds near the 5'-end of the 23S rRNA. It is important during the early stages of 50S assembly. It makes multiple contacts with different domains of the 23S rRNA in the assembled 50S subunit and ribosome. In terms of biological role, forms part of the polypeptide exit tunnel. This chain is Large ribosomal subunit protein uL4, found in Lactococcus lactis subsp. cremoris (strain SK11).